Consider the following 508-residue polypeptide: Photosystem II CP47 reaction center protein (508 aa).

Helical transmembrane passes span 21 to 36, 101 to 115, 140 to 156, 203 to 218, 237 to 252, and 457 to 472; these read SVHI…WAGS, IVFS…IWHW, GIHL…FGAF, IAAG…FHLS, VLSS…AFVV, and TFAL…HGAR.

The protein belongs to the PsbB/PsbC family. PsbB subfamily. In terms of assembly, PSII is composed of 1 copy each of membrane proteins PsbA, PsbB, PsbC, PsbD, PsbE, PsbF, PsbH, PsbI, PsbJ, PsbK, PsbL, PsbM, PsbT, PsbX, PsbY, PsbZ, Psb30/Ycf12, at least 3 peripheral proteins of the oxygen-evolving complex and a large number of cofactors. It forms dimeric complexes. Requires Binds multiple chlorophylls. PSII binds additional chlorophylls, carotenoids and specific lipids. as cofactor.

The protein resides in the plastid. The protein localises to the chloroplast thylakoid membrane. Its function is as follows. One of the components of the core complex of photosystem II (PSII). It binds chlorophyll and helps catalyze the primary light-induced photochemical processes of PSII. PSII is a light-driven water:plastoquinone oxidoreductase, using light energy to abstract electrons from H(2)O, generating O(2) and a proton gradient subsequently used for ATP formation. This Oryza sativa subsp. indica (Rice) protein is Photosystem II CP47 reaction center protein.